A 535-amino-acid polypeptide reads, in one-letter code: uncharacterized protein (535 aa).

WD repeat units lie at residues 189–226 (RDDF…TRVL), 228–267 (ESIY…PRIS), 269–314 (HHPG…AVLV), 320–359 (AHDE…QPLY), 362–404 (QQNA…KIDE), and 462–505 (VHSV…SWHN).

The protein belongs to the WD repeat CDC20/Fizzy family.

This is an uncharacterized protein from Schizosaccharomyces pombe (strain 972 / ATCC 24843) (Fission yeast).